The following is a 375-amino-acid chain: Tyrosine--tRNA ligase (375 aa).

5 residues coordinate L-tyrosine: Tyr37, Tyr168, Gln172, Asp175, and Gln190. The 'KMSKS' region signature appears at 251 to 255 (KMSKS). ATP is bound at residue Lys254.

Belongs to the class-I aminoacyl-tRNA synthetase family. TyrS type 4 subfamily. In terms of assembly, homodimer.

It is found in the cytoplasm. The enzyme catalyses tRNA(Tyr) + L-tyrosine + ATP = L-tyrosyl-tRNA(Tyr) + AMP + diphosphate + H(+). Catalyzes the attachment of tyrosine to tRNA(Tyr) in a two-step reaction: tyrosine is first activated by ATP to form Tyr-AMP and then transferred to the acceptor end of tRNA(Tyr). The sequence is that of Tyrosine--tRNA ligase from Thermococcus kodakarensis (strain ATCC BAA-918 / JCM 12380 / KOD1) (Pyrococcus kodakaraensis (strain KOD1)).